The sequence spans 98 residues: Homeobox protein SMOX-4 (98 aa).

The segment at residues 37–96 (SFRNRTAFTDYQLICLEREFSHIQYLSRIDRIHLAQNLNLTEKQVKIWFQNRRVRWRKRN) is a DNA-binding region (homeobox).

It localises to the nucleus. This chain is Homeobox protein SMOX-4 (SMOX-4), found in Schistosoma mansoni (Blood fluke).